A 206-amino-acid chain; its full sequence is Small ribosomal subunit protein uS4 (206 aa).

Residues G96–K156 enclose the S4 RNA-binding domain.

It belongs to the universal ribosomal protein uS4 family. In terms of assembly, part of the 30S ribosomal subunit. Contacts protein S5. The interaction surface between S4 and S5 is involved in control of translational fidelity.

In terms of biological role, one of the primary rRNA binding proteins, it binds directly to 16S rRNA where it nucleates assembly of the body of the 30S subunit. Its function is as follows. With S5 and S12 plays an important role in translational accuracy. This Haemophilus influenzae (strain 86-028NP) protein is Small ribosomal subunit protein uS4.